Reading from the N-terminus, the 974-residue chain is Glycine dehydrogenase (decarboxylating) (974 aa).

Lys720 is modified (N6-(pyridoxal phosphate)lysine).

Belongs to the GcvP family. As to quaternary structure, the glycine cleavage system is composed of four proteins: P, T, L and H. Requires pyridoxal 5'-phosphate as cofactor.

It catalyses the reaction N(6)-[(R)-lipoyl]-L-lysyl-[glycine-cleavage complex H protein] + glycine + H(+) = N(6)-[(R)-S(8)-aminomethyldihydrolipoyl]-L-lysyl-[glycine-cleavage complex H protein] + CO2. In terms of biological role, the glycine cleavage system catalyzes the degradation of glycine. The P protein binds the alpha-amino group of glycine through its pyridoxal phosphate cofactor; CO(2) is released and the remaining methylamine moiety is then transferred to the lipoamide cofactor of the H protein. This is Glycine dehydrogenase (decarboxylating) from Cupriavidus metallidurans (strain ATCC 43123 / DSM 2839 / NBRC 102507 / CH34) (Ralstonia metallidurans).